A 447-amino-acid polypeptide reads, in one-letter code: Protein chibby homolog 2 (447 aa).

Serine 41, serine 85, serine 88, serine 96, serine 123, serine 143, serine 147, and serine 149 each carry phosphoserine. Residues 164-197 (EYLLQEENKSLRDENRALRDENKALRKENKILQV) adopt a coiled-coil conformation. Disordered regions lie at residues 208-244 (HEES…KENT) and 266-320 (WAQA…EDSK). Serine 211 and serine 224 each carry phosphoserine. The segment covering 218-232 (LHKDTTSQEVVKKDN) has biased composition (basic and acidic residues). Positions 237-264 (AQRSKENTLQFIREENRALQQLLEQRQA) form a coiled coil. Positions 266–276 (WAQAEESATSA) are enriched in low complexity. A phosphoserine mark is found at serine 272 and serine 275. Residues 277–290 (EEGKPTSSPKEEPH) show a composition bias toward basic and acidic residues. A phosphoserine mark is found at serine 333 and serine 336. The stretch at 354–412 (LQLLREMNQALQALREENRLLQEENRALHAMREEHRVFQEENKALWENNKLKLQQRLVI) forms a coiled coil.

It belongs to the chibby family. SPERT subfamily. In terms of assembly, homodimer. Binds to NEK1.

This Rattus norvegicus (Rat) protein is Protein chibby homolog 2 (Cby2).